A 216-amino-acid polypeptide reads, in one-letter code: Guanylate kinase (216 aa).

The 179-residue stretch at 15-193 folds into the Guanylate kinase-like domain; it reads GNLFMVVAPS…ALEELRNVVR (179 aa). 22 to 29 provides a ligand contact to ATP; the sequence is APSGAGKS.

This sequence belongs to the guanylate kinase family.

It localises to the cytoplasm. It catalyses the reaction GMP + ATP = GDP + ADP. Its function is as follows. Essential for recycling GMP and indirectly, cGMP. The protein is Guanylate kinase of Cupriavidus pinatubonensis (strain JMP 134 / LMG 1197) (Cupriavidus necator (strain JMP 134)).